Consider the following 101-residue polypeptide: Small ribosomal subunit protein uS14 (101 aa).

This sequence belongs to the universal ribosomal protein uS14 family. In terms of assembly, part of the 30S ribosomal subunit. Contacts proteins S3 and S10.

Its function is as follows. Binds 16S rRNA, required for the assembly of 30S particles and may also be responsible for determining the conformation of the 16S rRNA at the A site. This is Small ribosomal subunit protein uS14 from Cronobacter sakazakii (strain ATCC BAA-894) (Enterobacter sakazakii).